We begin with the raw amino-acid sequence, 304 residues long: Probable aquaporin NIP5-1 (304 aa).

The next 2 membrane-spanning stretches (helical) occupy residues 80–100 and 106–126; these read LGAEFVGTFILIFTATAGPIV and GAETLIGNAACAGLAVMIIIL. An NPA 1 motif is present at residues 137 to 139; it reads NPS. 3 consecutive transmembrane segments (helical) span residues 157 to 177, 195 to 215, and 219 to 239; these read AYIAAQVSASICASFALKGVF, AFALEFIITFILLFVVTAVAT, and AVGELAGIAVGATVMLNILVA. The short motif at 248 to 250 is the NPA 2 element; it reads NPV. The helical transmembrane segment at 266–286 threads the bilayer; it reads WVYLVAPTLGAISGAAVYTGV. Ser301 bears the Phosphoserine mark.

The protein belongs to the MIP/aquaporin (TC 1.A.8) family. NIP (TC 1.A.8.12) subfamily. Expressed in rosette leaves.

Its subcellular location is the cell membrane. Functionally, boric acid transporter. Low water transport activity. Plays an important role as plasma membrane boric acid channel for the boron uptake required for plant growth and development under boron limitation. The polypeptide is Probable aquaporin NIP5-1 (NIP5-1) (Arabidopsis thaliana (Mouse-ear cress)).